We begin with the raw amino-acid sequence, 202 residues long: ATP-dependent Clp protease proteolytic subunit 1 (202 aa).

The active-site Nucleophile is Ser101. His126 is a catalytic residue.

It belongs to the peptidase S14 family. In terms of assembly, fourteen ClpP subunits assemble into 2 heptameric rings which stack back to back to give a disk-like structure with a central cavity, resembling the structure of eukaryotic proteasomes.

Its subcellular location is the cytoplasm. The enzyme catalyses Hydrolysis of proteins to small peptides in the presence of ATP and magnesium. alpha-casein is the usual test substrate. In the absence of ATP, only oligopeptides shorter than five residues are hydrolyzed (such as succinyl-Leu-Tyr-|-NHMec, and Leu-Tyr-Leu-|-Tyr-Trp, in which cleavage of the -Tyr-|-Leu- and -Tyr-|-Trp bonds also occurs).. Its function is as follows. Cleaves peptides in various proteins in a process that requires ATP hydrolysis. Has a chymotrypsin-like activity. Plays a major role in the degradation of misfolded proteins. The polypeptide is ATP-dependent Clp protease proteolytic subunit 1 (Rhizobium etli (strain ATCC 51251 / DSM 11541 / JCM 21823 / NBRC 15573 / CFN 42)).